A 311-amino-acid chain; its full sequence is Solute carrier family 25 member 48 (311 aa).

3 Solcar repeats span residues 3–86, 100–205, and 214–301; these read NFQL…TQRF, PHVL…LSDW, and PSPC…SLQA. 6 helical membrane-spanning segments follow: residues 9-29, 61-81, 107-127, 193-213, 217-237, and 277-295; these read FVAGWIGGAASVIVGHPLDTV, GMSFPLASIAVYNSVVFGVFS, LLASMVAGVVSVGLGAPVDLI, CLYFIPYVFLSDWITPEACAG, CAVWLAGGMAGAISWGTATPM, and ITVNAVRGFPMSAAMFLGY.

It belongs to the mitochondrial carrier (TC 2.A.29) family.

The protein localises to the mitochondrion inner membrane. This chain is Solute carrier family 25 member 48 (SLC25A48), found in Bos taurus (Bovine).